The following is a 546-amino-acid chain: ATP synthase subunit alpha (546 aa).

Residue 172–179 (GDRKTGKT) participates in ATP binding. Composition is skewed to polar residues over residues 511–520 (FRTTEGNNLG) and 536–546 (TELNVSRKTAK). Residues 511-546 (FRTTEGNNLGTEAPVDPLAADDVNKTELNVSRKTAK) form a disordered region.

This sequence belongs to the ATPase alpha/beta chains family. As to quaternary structure, F-type ATPases have 2 components, CF(1) - the catalytic core - and CF(0) - the membrane proton channel. CF(1) has five subunits: alpha(3), beta(3), gamma(1), delta(1), epsilon(1). CF(0) has three main subunits: a(1), b(2) and c(9-12). The alpha and beta chains form an alternating ring which encloses part of the gamma chain. CF(1) is attached to CF(0) by a central stalk formed by the gamma and epsilon chains, while a peripheral stalk is formed by the delta and b chains.

Its subcellular location is the cell membrane. The catalysed reaction is ATP + H2O + 4 H(+)(in) = ADP + phosphate + 5 H(+)(out). Functionally, produces ATP from ADP in the presence of a proton gradient across the membrane. The alpha chain is a regulatory subunit. The polypeptide is ATP synthase subunit alpha (Corynebacterium aurimucosum (strain ATCC 700975 / DSM 44827 / CIP 107346 / CN-1) (Corynebacterium nigricans)).